Reading from the N-terminus, the 686-residue chain is MQVSNVNDVKIYNLSCGKSLPEWLSDRKKRALQKKDVDVRRRIELIQDFEMPTVSTNIKVSRDGQYIMAAGTYKPRVRCYDTYQLSLKFERCLDAEVVKFDILSEDYSKIVFLQSDRYVELHSQHGRYYRLRIPKFGRDFAYHYPSCDLYFVGASSEVYRLNLEQGRYLNSLQTDASQINVCDINPAHHLFAAGTTEGKVECWDPRTRNRVGLLDCALSSVTADMEVEGLPSVSALKFHGPLHMAVGTSTGQVVLYDLRSNRPLIAKDHQYGLPIKSIQFHSALDLVISADSRIIKMWNKDNGKIFTSIEPEADVNDVCLYPNSGMLFTANEAPKMNVYYIPALGPAPRWCSFLDNLTEELEENPESTVYDDYKFVTRKELDELGLSHLIGSPLLRAYMHGFFMDIRLYHKVKAMVNPFAYEEYKKEKIRQKIEEARAQRVQIKKLPKVNKELALKLYEEEEELSQKKKKQKKMPNILSDDRFKVMFENPDFQVDQESEEYRLLNPLVSKISEKRKKKLKILEKLDAEDGEEEEEPEGKPSDAESSESSDDEKGWVEEVRKQRKLLRQEEKQRRQERVREDQQTALKPQFYEIKAGEEFRSFQDAAKKQKLMRKTLEDRVKVEEKLGTLNVSDTAVGSKQLTFTLKKFEQHRKRQEAEKQHQEERKKLRRSAGHLKSKPARGRPFH.

5 WD repeats span residues 50–90 (EMPT…LKFE), 174–213 (TDAS…RVGL), 228–266 (EGLP…PLIA), 270–308 (QYGL…IFTS), and 310–349 (EPEA…PAPR). Coiled coils occupy residues 420 to 470 (AYEE…KKKK), 555 to 587 (WVEE…TALK), and 639 to 676 (KQLT…GHLK). 2 disordered regions span residues 526–590 (DAED…KPQF) and 649–686 (EQHR…RPFH). 2 stretches are compositionally biased toward basic and acidic residues: residues 551-582 (DEKG…REDQ) and 655-666 (QEAEKQHQEERK). Basic residues predominate over residues 667 to 686 (KLRRSAGHLKSKPARGRPFH).

The protein belongs to the WD repeat NOL10/ENP2 family.

Its subcellular location is the nucleus. The protein localises to the nucleolus. In Xenopus tropicalis (Western clawed frog), this protein is Nucleolar protein 10 (nol10).